The chain runs to 83 residues: Erabutoxin b (83 aa).

Positions 1 to 21 (MKTLLLTLVVVTIVCLDLGYT) are cleaved as a signal peptide. Positions 24–38 (CFNHQSSQPQTTKTC) are loop I. 4 disulfide bridges follow: Cys-24/Cys-45, Cys-38/Cys-62, Cys-64/Cys-75, and Cys-76/Cys-81. Residues 39–44 (SPGESS) form a stretch between loop I and loop II region. The loop II stretch occupies residues 45–62 (CYHKQWSDFRGTIIERGC). The loop III stretch occupies residues 64-75 (CPTVKPGIKLSC).

It belongs to the three-finger toxin family. Short-chain subfamily. Type I alpha-neurotoxin sub-subfamily. In terms of tissue distribution, expressed by the venom gland.

Its subcellular location is the secreted. Functionally, binds with high affinity to muscular nicotinic acetylcholine receptors (nAChRs) (tested on Torpedo marmorata, Kd=0.07 nM), and with low affinity to neuronal alpha-7/CHRNA7 nAChRs (tested on chimeric alpha-7/CHRNA7, Kd=22 uM) and inhibit acetylcholine from binding to the receptor, thereby impairing neuromuscular transmission. Produces peripheral paralysis by blocking neuromuscular transmission at the postsynaptic site. The chain is Erabutoxin b from Laticauda semifasciata (Black-banded sea krait).